A 907-amino-acid polypeptide reads, in one-letter code: Gamma-tubulin complex component 3 (907 aa).

Residue alanine 2 is modified to N-acetylalanine. Residue serine 113 is modified to Phosphoserine. A compositionally biased stretch (polar residues) spans 210-230; that stretch reads NQPSSQATTSKGVPSAVSRNM. The interval 210–241 is disordered; the sequence is NQPSSQATTSKGVPSAVSRNMTRSRREGDTGG.

The protein belongs to the TUBGCP family. Component of the gamma-tubulin ring complex (gTuRC) consisting of TUBGCP2, TUBGCP3, TUBGCP4, TUBGCP5 and TUBGCP6 and gamma-tubulin TUBG1 or TUBG2. TUBGCP2, TUBGCP3, TUBGCP4, TUBGCP5 and TUBGCP6 assemble in a 5:5:2:1:1 stoichiometry; each is associated with a gamma-tubulin, thereby arranging 14 gamma-tubulins in a helical manner. Gamma-tubulin at the first position is blocked by TUBGCP3 at the last position, allowing 13 protafilaments to grow into a microtubule. The gTuRC (via TUBGCP3 and TUBGCP6) interacts with ACTB and MZT1; the interactions form a luminal bridge that stabilizes the initial structure during complex assembly. The gTuRC (via TUBGCP2) interacts with MZT2A/MZT2B and CDK5RAP2 (via CM1 motif); the interactions play a role in gTuRC activation. Interacts with NIN (via N-terminus); the interaction may promote recruitment of the gamma-tubulin ring complex to the centrosome. As to expression, ubiquitously expressed.

It is found in the cytoplasm. The protein localises to the cytoskeleton. Its subcellular location is the microtubule organizing center. It localises to the centrosome. In terms of biological role, component of the gamma-tubulin ring complex (gTuRC) which mediates microtubule nucleation. The gTuRC regulates the minus-end nucleation of alpha-beta tubulin heterodimers that grow into microtubule protafilaments, a critical step in centrosome duplication and spindle formation. This is Gamma-tubulin complex component 3 (TUBGCP3) from Homo sapiens (Human).